The chain runs to 765 residues: Probable beta-glucosidase M (765 aa).

A signal peptide spans M1–A19. N-linked (GlcNAc...) asparagine glycosylation is found at N24, N71, N93, N126, and N258. D286 is an active-site residue. N-linked (GlcNAc...) asparagine glycosylation is found at N314, N321, N432, N519, N541, and N647.

The protein belongs to the glycosyl hydrolase 3 family.

It is found in the secreted. The catalysed reaction is Hydrolysis of terminal, non-reducing beta-D-glucosyl residues with release of beta-D-glucose.. It functions in the pathway glycan metabolism; cellulose degradation. Beta-glucosidases are one of a number of cellulolytic enzymes involved in the degradation of cellulosic biomass. Catalyzes the last step releasing glucose from the inhibitory cellobiose. In Aspergillus niger (strain ATCC MYA-4892 / CBS 513.88 / FGSC A1513), this protein is Probable beta-glucosidase M (bglM).